The chain runs to 166 residues: NAD(P)H-quinone oxidoreductase subunit I, chloroplastic (166 aa).

2 consecutive 4Fe-4S ferredoxin-type domains span residues 55–84 (GRIH…VDWK) and 95–124 (LNYS…MTEE). Residues cysteine 64, cysteine 67, cysteine 70, cysteine 74, cysteine 104, cysteine 107, cysteine 110, and cysteine 114 each contribute to the [4Fe-4S] cluster site.

The protein belongs to the complex I 23 kDa subunit family. As to quaternary structure, NDH is composed of at least 16 different subunits, 5 of which are encoded in the nucleus. The cofactor is [4Fe-4S] cluster.

The protein resides in the plastid. Its subcellular location is the chloroplast thylakoid membrane. The enzyme catalyses a plastoquinone + NADH + (n+1) H(+)(in) = a plastoquinol + NAD(+) + n H(+)(out). It carries out the reaction a plastoquinone + NADPH + (n+1) H(+)(in) = a plastoquinol + NADP(+) + n H(+)(out). NDH shuttles electrons from NAD(P)H:plastoquinone, via FMN and iron-sulfur (Fe-S) centers, to quinones in the photosynthetic chain and possibly in a chloroplast respiratory chain. The immediate electron acceptor for the enzyme in this species is believed to be plastoquinone. Couples the redox reaction to proton translocation, and thus conserves the redox energy in a proton gradient. The protein is NAD(P)H-quinone oxidoreductase subunit I, chloroplastic of Oxypappus scaber.